Reading from the N-terminus, the 148-residue chain is Cdc42 effector protein 5 (148 aa).

2 disordered regions span residues 1–89 (MPVL…DPLL) and 111–148 (RPEA…VIGL). One can recognise a CRIB domain in the interval 23–37 (ISAPLGDFRHTLHVG). An Omega-N-methylarginine modification is found at arginine 38. The segment covering 55–76 (GPPPEPRAPPAGAPRSPPPPAV) has biased composition (pro residues). The segment covering 77 to 87 (PQSAAPSPADP) has biased composition (low complexity).

The protein belongs to the BORG/CEP family. As to quaternary structure, interacts with CDC42, in a GTP-dependent manner, and with SEPT7.

The protein localises to the endomembrane system. Its subcellular location is the cytoplasm. It localises to the cytoskeleton. Probably involved in the organization of the actin cytoskeleton. May act downstream of CDC42 to induce actin filament assembly leading to cell shape changes. Induces pseudopodia formation in fibroblasts. Inhibits MAPK8 independently of CDC42 binding. Controls septin organization and this effect is negatively regulated by CDC42. This chain is Cdc42 effector protein 5 (CDC42EP5), found in Homo sapiens (Human).